Reading from the N-terminus, the 236-residue chain is Methylosome subunit pICln (236 aa).

Ser-2 is subject to N-acetylserine. A phosphoserine mark is found at Ser-95, Ser-143, Ser-192, Ser-194, Ser-197, and Ser-209. The tract at residues 134 to 158 is disordered; that stretch reads LHPDPEDEDSDDYDGEEYDVEAHEQ. Residues 138 to 152 are compositionally biased toward acidic residues; sequence PEDEDSDDYDGEEYD. A Phosphothreonine modification is found at Thr-222.

The protein belongs to the pICln (TC 1.A.47) family. In terms of assembly, component of the methylosome, a 20S complex containing at least PRMT5/SKB1, WDR77/MEP50 and CLNS1A/pICln. May mediate SNRPD1 and SNRPD3 methylation. Forms a 6S pICln-Sm complex composed of CLNS1A/pICln, SNRPD1, SNRPD2, SNRPE, SNRPF and SNRPG; ring-like structure where CLNS1A/pICln mimics additional Sm proteins and which is unable to assemble into the core snRNP. Interacts with LSM10 and LSM11. As to expression, expressed in most tissues.

Its subcellular location is the cytoplasm. The protein localises to the cytosol. The protein resides in the nucleus. It is found in the cytoskeleton. In terms of biological role, involved in both the assembly of spliceosomal snRNPs and the methylation of Sm proteins. Chaperone that regulates the assembly of spliceosomal U1, U2, U4 and U5 small nuclear ribonucleoproteins (snRNPs), the building blocks of the spliceosome, and thereby plays an important role in the splicing of cellular pre-mRNAs. Most spliceosomal snRNPs contain a common set of Sm proteins SNRPB, SNRPD1, SNRPD2, SNRPD3, SNRPE, SNRPF and SNRPG that assemble in a heptameric protein ring on the Sm site of the small nuclear RNA to form the core snRNP (Sm core). In the cytosol, the Sm proteins SNRPD1, SNRPD2, SNRPE, SNRPF and SNRPG are trapped in an inactive 6S pICln-Sm complex by the chaperone CLNS1A that controls the assembly of the core snRNP. Dissociation by the SMN complex of CLNS1A from the trapped Sm proteins and their transfer to an SMN-Sm complex triggers the assembly of core snRNPs and their transport to the nucleus. This is Methylosome subunit pICln (Clns1a) from Rattus norvegicus (Rat).